The primary structure comprises 448 residues: Immunoglobulin G-binding protein G (448 aa).

An N-terminal signal peptide occupies residues 1 to 33 (MEKEKKVKYFLRKSAFGLASVSAAFLVGSTVFA). A run of 4 repeats spans residues 104–140 (LAKA…IKDL), 179–215 (LAEA…VKEL), 228–282 (TYKL…TVTE), and 298–352 (TYKL…TVTE). A 2 X 37 AA repeats region spans residues 104-215 (LAKAKADALK…AKTVEGVKEL (112 aa)). The 2 X 55 AA repeats stretch occupies residues 228–352 (TYKLILNGKT…DATKTFTVTE (125 aa)). The disordered stretch occupies residues 358–422 (PGDAPTEPEK…TLPTTGEGSN (65 aa)). The span at 384-412 (AKDDAKKDDTKKEDAKKPEAKKDDAKKAE) shows a compositional bias: basic and acidic residues. The 5 X 5 AA repeats of [DE]-D-A-K-K stretch occupies residues 386 to 410 (DDAKKDDTKKEDAKKPEAKKDDAKK). Residues 414-418 (LPTTG) carry the LPXTG sorting signal motif. Threonine 417 bears the Pentaglycyl murein peptidoglycan amidated threonine mark. Positions 418–448 (GEGSNPFFTAAALAVMAGAGALAVASKRKED) are cleaved as a propeptide — removed by sortase.

It localises to the secreted. It is found in the cell wall. In terms of biological role, binds to the constant Fc region of IgG with high affinity. The sequence is that of Immunoglobulin G-binding protein G (spg) from Streptococcus sp. group G.